A 409-amino-acid polypeptide reads, in one-letter code: Transforming growth factor beta-3 proprotein (409 aa).

The signal sequence occupies residues 1–21 (MHLQRALVVLALLNFATVSLS). N72, N133, and N140 each carry an N-linked (GlcNAc...) asparagine glycan. The Cell attachment site motif lies at 259–261 (RGD). Intrachain disulfides connect C304/C313, C312/C375, C341/C406, and C345/C408.

The protein belongs to the TGF-beta family. Interacts with ASPN. Latency-associated peptide: Homodimer; disulfide-linked. Latency-associated peptide: Interacts with Transforming growth factor beta-3 (TGF-beta-3) chain; interaction is non-covalent and maintains (TGF-beta-3) in a latent state. Latency-associated peptide: Interacts with LRRC32/GARP; leading to regulate activation of TGF-beta-3 and promote epithelial fusion during palate development. Latency-associated peptide: Interacts (via cell attachment site) with integrins, leading to release of the active TGF-beta-3. Transforming growth factor beta-3: Homodimer; disulfide-linked. Transforming growth factor beta-3: Interacts with TGF-beta receptors (TGFBR1 and TGFBR2), leading to signal transduction. In terms of processing, transforming growth factor beta-3 proprotein: The precursor proprotein is cleaved in the Golgi apparatus to form Transforming growth factor beta-3 (TGF-beta-3) and Latency-associated peptide (LAP) chains, which remain non-covalently linked, rendering TGF-beta-3 inactive.

Its subcellular location is the secreted. It is found in the extracellular space. It localises to the extracellular matrix. Functionally, transforming growth factor beta-3 proprotein: Precursor of the Latency-associated peptide (LAP) and Transforming growth factor beta-3 (TGF-beta-3) chains, which constitute the regulatory and active subunit of TGF-beta-3, respectively. Required to maintain the Transforming growth factor beta-3 (TGF-beta-3) chain in a latent state during storage in extracellular matrix. Associates non-covalently with TGF-beta-3 and regulates its activation via interaction with 'milieu molecules', such as LTBP1 and LRRC32/GARP, that control activation of TGF-beta-3. Interaction with integrins results in distortion of the Latency-associated peptide chain and subsequent release of the active TGF-beta-3. Its function is as follows. Transforming growth factor beta-3: Multifunctional protein that regulates embryogenesis and cell differentiation and is required in various processes such as secondary palate development. Activation into mature form follows different steps: following cleavage of the proprotein in the Golgi apparatus, Latency-associated peptide (LAP) and Transforming growth factor beta-3 (TGF-beta-3) chains remain non-covalently linked rendering TGF-beta-3 inactive during storage in extracellular matrix. At the same time, LAP chain interacts with 'milieu molecules', such as LTBP1 and LRRC32/GARP that control activation of TGF-beta-3 and maintain it in a latent state during storage in extracellular milieus. TGF-beta-3 is released from LAP by integrins: integrin-binding results in distortion of the LAP chain and subsequent release of the active TGF-beta-3. Once activated following release of LAP, TGF-beta-3 acts by binding to TGF-beta receptors (TGFBR1 and TGFBR2), which transduce signal. This is Transforming growth factor beta-3 proprotein (TGFB3) from Sus scrofa (Pig).